The chain runs to 204 residues: CASP-like protein 1U3 (204 aa).

Residues 1-19 are Cytoplasmic-facing; that stretch reads MCEGEKKKDSSSGALYCVN. The helical transmembrane segment at 20–40 threads the bilayer; sequence LALRIVVLGLAVAAAALMATA. Topologically, residues 41–63 are extracellular; it reads SQCTIFLYYGGPLHTITYKDFGP. Residues 64-84 traverse the membrane as a helical segment; it reads FVYLVVASSIGAFMEAIAIFL. Residues 85-97 are Cytoplasmic-facing; sequence TICKKKDGTPAKV. A helical transmembrane segment spans residues 98–118; sequence LLPLLDAAVPVLLYSATAAAF. The Extracellular portion of the chain corresponds to 119 to 146; the sequence is AAGDMSYCAVGKRVGVCTTAAAGNFCNQ. The chain crosses the membrane as a helical span at residues 147 to 167; it reads VHIAMYVSLAAGVALLVAEIV. The Cytoplasmic portion of the chain corresponds to 168 to 204; it reads KHWPDSGKKKEGGGGGCGSDSDSDKSTPCHHGCHSKH. The disordered stretch occupies residues 173–204; it reads SGKKKEGGGGGCGSDSDSDKSTPCHHGCHSKH.

Belongs to the Casparian strip membrane proteins (CASP) family. Homodimer and heterodimers.

It is found in the cell membrane. This chain is CASP-like protein 1U3, found in Oryza sativa subsp. japonica (Rice).